Consider the following 188-residue polypeptide: Putative manganese efflux pump MntP (188 aa).

The next 6 membrane-spanning stretches (helical) occupy residues 3–23, 35–55, 70–90, 104–126, 140–160, and 167–187; these read LYALLLIALGMSMDAFAVALA, IAATALVFGTVEALTPLAGWV, WAAFVLLGGLGLKMMHEGLSG, WLTVLTAFGTSIDSMIVGVGLAF, MATTVLVAVGLTVGRALGVLF, and AGGLVLIAIGTWTLLSHLGLI.

It belongs to the MntP (TC 9.B.29) family.

It is found in the cell inner membrane. Functionally, probably functions as a manganese efflux pump. This is Putative manganese efflux pump MntP from Neisseria meningitidis serogroup C / serotype 2a (strain ATCC 700532 / DSM 15464 / FAM18).